The chain runs to 313 residues: MANRTVKDANSVHGTNPQYLVEKIIRTRIYESKYWKEECFGLTAELVVDKAMELKFVGGVYGGNVKPTPFLCLTLKMLQIQPEKDIIVEFIKNEDFKYVRLLGAMYMRLTGTSVDCYKYLEPLYNDYRKIKSQNRNGEFELMHVDEFIDELLHAERMCDIILPRLQKRQVLEEAELLDPRISALEEDLDEVETSEEEDDEDEKPERMQSPEPHRRSYRDMDRPRRSPSPRYRRSRSPRRRSRSPKRRSPSPRRERDRDRHRSKSPRRHRSRSRERRHRSKSPGHHRSHRHRSHSKSPESRSKKSHKRSRRGNE.

The tract at residues 1 to 179 (MANRTVKDAN…VLEEAELLDP (179 aa)) is N-terminal protein interaction domain. Residues 172 to 201 (EEAELLDPRISALEEDLDEVETSEEEDDED) are a coiled coil. The segment at 182 to 313 (SALEEDLDEV…SHKRSRRGNE (132 aa)) is disordered. Positions 184–202 (LEEDLDEVETSEEEDDEDE) are enriched in acidic residues. Residues 203 to 224 (KPERMQSPEPHRRSYRDMDRPR) show a composition bias toward basic and acidic residues. Basic residues-rich tracts occupy residues 225 to 250 (RSPS…RSPS), 260 to 294 (HRSK…RSHS), and 302 to 313 (KKSHKRSRRGNE).

This sequence belongs to the PRP38 family. As to quaternary structure, component of the spliceosome B complex.

Its subcellular location is the nucleus. Its function is as follows. Involved in pre-mRNA splicing as a component of the spliceosome. The polypeptide is Pre-mRNA-splicing factor 38A (prpf38a) (Danio rerio (Zebrafish)).